The following is a 359-amino-acid chain: Membrane-bound lytic murein transglycosylase C (359 aa).

Residues 1–16 (MKKYLALALIAPLLIS) form the signal peptide. Cys-17 is lipidated: N-palmitoyl cysteine. The S-diacylglycerol cysteine moiety is linked to residue Cys-17.

Belongs to the transglycosylase Slt family.

It localises to the cell outer membrane. The catalysed reaction is Exolytic cleavage of the (1-&gt;4)-beta-glycosidic linkage between N-acetylmuramic acid (MurNAc) and N-acetylglucosamine (GlcNAc) residues in peptidoglycan, from either the reducing or the non-reducing ends of the peptidoglycan chains, with concomitant formation of a 1,6-anhydrobond in the MurNAc residue.. Murein-degrading enzyme. May play a role in recycling of muropeptides during cell elongation and/or cell division. This Escherichia coli O127:H6 (strain E2348/69 / EPEC) protein is Membrane-bound lytic murein transglycosylase C.